Consider the following 267-residue polypeptide: Serine/threonine-protein kinase 1 (267 aa).

The region spanning 18–266 (IQNNVRLVDG…YETVIKHSFL (249 aa)) is the Protein kinase domain. ATP contacts are provided by residues 24 to 32 (LVDGKFGKM) and Lys-47. Asp-134 acts as the Proton acceptor in catalysis.

The protein belongs to the protein kinase superfamily. Ser/Thr protein kinase family.

The catalysed reaction is L-seryl-[protein] + ATP = O-phospho-L-seryl-[protein] + ADP + H(+). It catalyses the reaction L-threonyl-[protein] + ATP = O-phospho-L-threonyl-[protein] + ADP + H(+). In Heliothis zea nuclear polyhedrosis virus (HzSNPV), this protein is Serine/threonine-protein kinase 1 (PK1).